Reading from the N-terminus, the 86-residue chain is Small ribosomal subunit protein bS16 (86 aa).

It belongs to the bacterial ribosomal protein bS16 family.

The sequence is that of Small ribosomal subunit protein bS16 from Myxococcus xanthus (strain DK1622).